The sequence spans 555 residues: Poly(A) polymerase PAPa (555 aa).

Residues 1-20 (MNNQAYGVTPPISVANSTPK) form a disordered region. Residues 86–88 (FGS), 99–101 (DID), aspartate 153, lysine 214, tyrosine 223, and 232–233 (GV) contribute to the ATP site. Residues aspartate 99, aspartate 101, and aspartate 153 each coordinate Mg(2+). The interval 532–555 (KRKRAVSKNEGKKKPKSVGTVSAA) is disordered.

This sequence belongs to the poly(A) polymerase family. Mg(2+) serves as cofactor. It depends on Mn(2+) as a cofactor.

It is found in the nucleus. The enzyme catalyses RNA(n) + ATP = RNA(n)-3'-adenine ribonucleotide + diphosphate. Functionally, polymerase that creates the 3'-poly(A) tail of mRNA's. May acquire specificity through interaction with a cleavage and polyadenylation factor. This is Poly(A) polymerase PAPa (PAPA) from Candida albicans (strain SC5314 / ATCC MYA-2876) (Yeast).